Consider the following 790-residue polypeptide: DNA ligase 1 (790 aa).

Residues 1–64 (MLAIRSSNYL…AFDALMSNAR (64 aa)) constitute a mitochondrion transit peptide. The disordered stretch occupies residues 64-142 (RAAAKKKTPQ…TGAKKAKTLS (79 aa)). The short motif at 68–75 (KKKTPQTT) is the Nuclear localization signal 1 element. The span at 116 to 128 (DSANPRSDTSSIA) shows a compositional bias: polar residues. The segment at 337–346 (KLRLGFSGQT) is interaction with target DNA. E442 contacts ATP. The active-site N6-AMP-lysine intermediate is the K444. ATP is bound by residues R449 and R465. E497 serves as a coordination point for Mg(2+). The short motif at 505–512 (KKKILPFQ) is the Nuclear localization signal 2 element. Residues 518–520 (ARK) are interaction with target DNA. Position 596 (E596) interacts with Mg(2+). ATP is bound by residues K601, R614, and K620. The segment at 757–790 (DKKPEEATSSEQIADLYQAQKHNHPSNEVKGDDD) is disordered. Residues 781 to 790 (PSNEVKGDDD) show a composition bias toward basic and acidic residues.

Belongs to the ATP-dependent DNA ligase family. It depends on Mg(2+) as a cofactor. In terms of tissue distribution, expressed in all vegetative and reproductive tissues.

The protein localises to the mitochondrion. The protein resides in the nucleus. The enzyme catalyses ATP + (deoxyribonucleotide)n-3'-hydroxyl + 5'-phospho-(deoxyribonucleotide)m = (deoxyribonucleotide)n+m + AMP + diphosphate.. Functionally, essential protein. DNA ligase that seals nicks in double-stranded DNA during DNA replication, DNA recombination and DNA repair. Involved in repair of both single strand breaks (SSBs) and double strand breaks (DSBs). Required in the endosperm for embryogenesis, probably to repair DNA-breaks generated by DME. In Arabidopsis thaliana (Mouse-ear cress), this protein is DNA ligase 1 (LIG1).